Here is a 337-residue protein sequence, read N- to C-terminus: Phosphate acyltransferase (337 aa).

It belongs to the PlsX family. As to quaternary structure, homodimer. Probably interacts with PlsY.

It is found in the cytoplasm. It catalyses the reaction a fatty acyl-[ACP] + phosphate = an acyl phosphate + holo-[ACP]. It participates in lipid metabolism; phospholipid metabolism. Functionally, catalyzes the reversible formation of acyl-phosphate (acyl-PO(4)) from acyl-[acyl-carrier-protein] (acyl-ACP). This enzyme utilizes acyl-ACP as fatty acyl donor, but not acyl-CoA. In Listeria welshimeri serovar 6b (strain ATCC 35897 / DSM 20650 / CCUG 15529 / CIP 8149 / NCTC 11857 / SLCC 5334 / V8), this protein is Phosphate acyltransferase.